Reading from the N-terminus, the 721-residue chain is Phosphomethylpyrimidine synthase (721 aa).

Residues Asn-256, Met-285, Tyr-314, His-350, 370–372 (SRG), 411–414 (DGMR), and Glu-450 each bind substrate. His-454 contacts Zn(2+). Residue Tyr-477 participates in substrate binding. His-518 is a binding site for Zn(2+). Residues Cys-598, Cys-601, and Cys-606 each contribute to the [4Fe-4S] cluster site.

This sequence belongs to the ThiC family. Homodimer. [4Fe-4S] cluster is required as a cofactor.

It catalyses the reaction 5-amino-1-(5-phospho-beta-D-ribosyl)imidazole + S-adenosyl-L-methionine = 4-amino-2-methyl-5-(phosphooxymethyl)pyrimidine + CO + 5'-deoxyadenosine + formate + L-methionine + 3 H(+). It functions in the pathway cofactor biosynthesis; thiamine diphosphate biosynthesis. Functionally, catalyzes the synthesis of the hydroxymethylpyrimidine phosphate (HMP-P) moiety of thiamine from aminoimidazole ribotide (AIR) in a radical S-adenosyl-L-methionine (SAM)-dependent reaction. The polypeptide is Phosphomethylpyrimidine synthase (Shewanella oneidensis (strain ATCC 700550 / JCM 31522 / CIP 106686 / LMG 19005 / NCIMB 14063 / MR-1)).